We begin with the raw amino-acid sequence, 255 residues long: Glutamate racemase (255 aa).

Substrate-binding positions include 7 to 8 (DS) and 39 to 40 (YG). Catalysis depends on Cys-70, which acts as the Proton donor/acceptor. 71–72 (NT) lines the substrate pocket. Cys-181 serves as the catalytic Proton donor/acceptor. Substrate is bound at residue 182-183 (TH).

It belongs to the aspartate/glutamate racemases family.

It catalyses the reaction L-glutamate = D-glutamate. Its pathway is cell wall biogenesis; peptidoglycan biosynthesis. Its function is as follows. Provides the (R)-glutamate required for cell wall biosynthesis. In Helicobacter pylori (strain G27), this protein is Glutamate racemase.